The following is a 273-amino-acid chain: 4-hydroxy-tetrahydrodipicolinate reductase (273 aa).

NAD(+) contacts are provided by residues 12–17 and Glu38; that span reads GAGGRM. Arg39 contributes to the NADP(+) binding site. NAD(+) contacts are provided by residues 102–104 and 126–129; these read GTT and AANF. Catalysis depends on His159, which acts as the Proton donor/acceptor. Residue His160 participates in (S)-2,3,4,5-tetrahydrodipicolinate binding. The Proton donor role is filled by Lys163. Residue 169–170 coordinates (S)-2,3,4,5-tetrahydrodipicolinate; sequence GT.

Belongs to the DapB family. As to quaternary structure, homotetramer.

The protein localises to the cytoplasm. It catalyses the reaction (S)-2,3,4,5-tetrahydrodipicolinate + NAD(+) + H2O = (2S,4S)-4-hydroxy-2,3,4,5-tetrahydrodipicolinate + NADH + H(+). It carries out the reaction (S)-2,3,4,5-tetrahydrodipicolinate + NADP(+) + H2O = (2S,4S)-4-hydroxy-2,3,4,5-tetrahydrodipicolinate + NADPH + H(+). Its pathway is amino-acid biosynthesis; L-lysine biosynthesis via DAP pathway; (S)-tetrahydrodipicolinate from L-aspartate: step 4/4. Its function is as follows. Catalyzes the conversion of 4-hydroxy-tetrahydrodipicolinate (HTPA) to tetrahydrodipicolinate. In Salmonella arizonae (strain ATCC BAA-731 / CDC346-86 / RSK2980), this protein is 4-hydroxy-tetrahydrodipicolinate reductase.